Reading from the N-terminus, the 409-residue chain is uncharacterized protein (409 aa).

Residues 36–50 are compositionally biased toward basic and acidic residues; sequence HLKAKARAQESDSDR. Disordered stretches follow at residues 36–67, 239–298, and 338–373; these read HLKA…TFSS, IENT…SSTI, and RSQI…TGPR. Residues 51 to 67 show a composition bias toward low complexity; the sequence is PCSSIESSSEPASTFSS. The segment covering 245-265 has biased composition (basic and acidic residues); the sequence is VREESNQEHPPGKQEKTEKHP. The span at 268 to 281 shows a compositional bias: polar residues; it reads LQGSHQAEPETSSK. Basic and acidic residues-rich tracts occupy residues 282 to 294 and 338 to 350; these read NSEE…KMDD and RSQI…EGRR.

This is an uncharacterized protein from Homo sapiens (Human).